Consider the following 501-residue polypeptide: ATP synthase subunit alpha, chloroplastic (501 aa).

170–177 (GDRQTGKT) contacts ATP.

The protein belongs to the ATPase alpha/beta chains family. F-type ATPases have 2 components, CF(1) - the catalytic core - and CF(0) - the membrane proton channel. CF(1) has five subunits: alpha(3), beta(3), gamma(1), delta(1), epsilon(1). CF(0) has four main subunits: a, b, b' and c.

The protein resides in the plastid. It is found in the chloroplast thylakoid membrane. It carries out the reaction ATP + H2O + 4 H(+)(in) = ADP + phosphate + 5 H(+)(out). In terms of biological role, produces ATP from ADP in the presence of a proton gradient across the membrane. The alpha chain is a regulatory subunit. The chain is ATP synthase subunit alpha, chloroplastic from Nephroselmis olivacea (Green alga).